Consider the following 265-residue polypeptide: Cytochrome b-c1 complex subunit Rieske, mitochondrial (265 aa).

The transit peptide at 1–53 (MLRVAGRRLSSSAARSSSTFFTRSSFTVTDDSSPARSPSPSLTSSFLDQIRGF) directs the protein to the mitochondrion. Residues 54–102 (SSNSVSPAHQLGLVSDLPATVAAIKNPSSKIVYDDSNHERYPPGDPSKR) lie on the Mitochondrial matrix side of the membrane. A helical transmembrane segment spans residues 103 to 125 (AFAYFVLTGGRFVYASSVRLLIL). At 126–265 (KFVLSMSASK…FLEENKLLIG (140 aa)) the chain is on the mitochondrial intermembrane side. Residues 175–263 (IKLANSVDLG…YSFLEENKLL (89 aa)) form the Rieske domain. [2Fe-2S] cluster contacts are provided by Cys-208, His-210, Cys-227, and His-230. An intrachain disulfide couples Cys-213 to Cys-229.

Belongs to the Rieske iron-sulfur protein family. In terms of assembly, component of the ubiquinol-cytochrome c oxidoreductase (cytochrome b-c1 complex, complex III, CIII), a multisubunit enzyme composed of 3 respiratory subunits cytochrome b, cytochrome c1 and Rieske protein, 2 core protein subunits, and several low-molecular weight protein subunits. The complex exists as an obligatory dimer and forms supercomplexes (SCs) in the inner mitochondrial membrane with cytochrome c oxidase (complex IV, CIV). The cofactor is [2Fe-2S] cluster.

Its subcellular location is the mitochondrion inner membrane. It catalyses the reaction a quinol + 2 Fe(III)-[cytochrome c](out) = a quinone + 2 Fe(II)-[cytochrome c](out) + 2 H(+)(out). Functionally, component of the ubiquinol-cytochrome c oxidoreductase, a multisubunit transmembrane complex that is part of the mitochondrial electron transport chain which drives oxidative phosphorylation. The respiratory chain contains 3 multisubunit complexes succinate dehydrogenase (complex II, CII), ubiquinol-cytochrome c oxidoreductase (cytochrome b-c1 complex, complex III, CIII) and cytochrome c oxidase (complex IV, CIV), that cooperate to transfer electrons derived from NADH and succinate to molecular oxygen, creating an electrochemical gradient over the inner membrane that drives transmembrane transport and the ATP synthase. The cytochrome b-c1 complex catalyzes electron transfer from ubiquinol to cytochrome c, linking this redox reaction to translocation of protons across the mitochondrial inner membrane, with protons being carried across the membrane as hydrogens on the quinol. In the process called Q cycle, 2 protons are consumed from the matrix, 4 protons are released into the intermembrane space and 2 electrons are passed to cytochrome c. The Rieske protein is a catalytic core subunit containing a [2Fe-2S] iron-sulfur cluster. It cycles between 2 conformational states during catalysis to transfer electrons from the quinol bound in the Q(0) site in cytochrome b to cytochrome c1. In Solanum tuberosum (Potato), this protein is Cytochrome b-c1 complex subunit Rieske, mitochondrial (FES1).